The chain runs to 217 residues: Ribosomal RNA large subunit methyltransferase E (217 aa).

Residues glycine 64, tryptophan 66, aspartate 92, aspartate 108, and aspartate 133 each contribute to the S-adenosyl-L-methionine site. The active-site Proton acceptor is lysine 173.

The protein belongs to the class I-like SAM-binding methyltransferase superfamily. RNA methyltransferase RlmE family.

Its subcellular location is the cytoplasm. It catalyses the reaction uridine(2552) in 23S rRNA + S-adenosyl-L-methionine = 2'-O-methyluridine(2552) in 23S rRNA + S-adenosyl-L-homocysteine + H(+). Functionally, specifically methylates the uridine in position 2552 of 23S rRNA at the 2'-O position of the ribose in the fully assembled 50S ribosomal subunit. This is Ribosomal RNA large subunit methyltransferase E from Delftia acidovorans (strain DSM 14801 / SPH-1).